A 90-amino-acid chain; its full sequence is UPF0237 protein BL1209.1 (90 aa).

In terms of domain architecture, ACT spans Ile-5–Gln-79.

The protein belongs to the UPF0237 family.

The protein is UPF0237 protein BL1209.1 of Bifidobacterium longum (strain NCC 2705).